We begin with the raw amino-acid sequence, 611 residues long: UvrABC system protein C (611 aa).

Positions 6-84 (NNPGVYRMFN…IKRLRPRFNV (79 aa)) constitute a GIY-YIG domain. The 36-residue stretch at 194–229 (QSVKDHLAAAMQAASADLDFEHAAVYRDRLAALSHV) folds into the UVR domain.

This sequence belongs to the UvrC family. In terms of assembly, interacts with UvrB in an incision complex.

It is found in the cytoplasm. The UvrABC repair system catalyzes the recognition and processing of DNA lesions. UvrC both incises the 5' and 3' sides of the lesion. The N-terminal half is responsible for the 3' incision and the C-terminal half is responsible for the 5' incision. In Brucella abortus (strain 2308), this protein is UvrABC system protein C.